The primary structure comprises 102 residues: S-phase delaying protein 2 (102 aa).

The tract at residues 43–62 (FPSYHKDQTDRNELPQQKHD) is disordered. Over residues 46–62 (YHKDQTDRNELPQQKHD) the composition is skewed to basic and acidic residues.

This sequence belongs to the DIF1/spd1 family.

It is found in the cytoplasm. The protein resides in the nucleus. Regulates the ribonucleotide reductase activity. This is S-phase delaying protein 2 (spd2) from Schizosaccharomyces pombe (strain 972 / ATCC 24843) (Fission yeast).